The following is a 344-amino-acid chain: Laforin, isoform 9 (344 aa).

Disordered regions lie at residues 1 to 44 (MHPK…PGPG), 58 to 134 (GGGA…PRGH), 158 to 188 (PAPGAERELRPAPPTGASASGRPRRPRRRAS), and 320 to 344 (SLKKTQNDPTNETSVFANPRQQCAT). Residues 77–88 (AARAGALGAARC) are compositionally biased toward low complexity. The span at 101-131 (RGPGPAGAGPVARGGGAGGRGGGAGRGGAGP) shows a compositional bias: gly residues. Over residues 179 to 188 (RPRRPRRRAS) the composition is skewed to basic residues.

Interacts with isoform 1 and isoform 2.

It localises to the nucleus. This chain is Laforin, isoform 9, found in Homo sapiens (Human).